Reading from the N-terminus, the 1431-residue chain is DNA polymerase II large subunit (1431 aa).

The disordered stretch occupies residues 1388-1431 (LLENFANGYNKGKKEEMPKKQRKKEQEKSKKRKVISLDDFFSRK). Residues 1399–1415 (GKKEEMPKKQRKKEQEK) are compositionally biased toward basic and acidic residues.

The protein belongs to the archaeal DNA polymerase II family. In terms of assembly, heterodimer of a large subunit and a small subunit. This protein undergoes a protein self splicing that involves a post-translational excision of the intervening region (intein) followed by peptide ligation.

It catalyses the reaction DNA(n) + a 2'-deoxyribonucleoside 5'-triphosphate = DNA(n+1) + diphosphate. It carries out the reaction Exonucleolytic cleavage in the 3'- to 5'-direction to yield nucleoside 5'-phosphates.. Possesses two activities: a DNA synthesis (polymerase) and an exonucleolytic activity that degrades single-stranded DNA in the 3'- to 5'-direction. Has a template-primer preference which is characteristic of a replicative DNA polymerase. This is DNA polymerase II large subunit (polC) from Pyrococcus horikoshii (strain ATCC 700860 / DSM 12428 / JCM 9974 / NBRC 100139 / OT-3).